The primary structure comprises 644 residues: Exoribonuclease 2 (644 aa).

An RNB domain is found at 189 to 516 (RQDLTALNFV…NHRLLKAVIK (328 aa)). An S1 motif domain is found at 561–643 (NTRFAAEIID…ETRSIIARPA (83 aa)).

It belongs to the RNR ribonuclease family. RNase II subfamily.

The protein localises to the cytoplasm. The catalysed reaction is Exonucleolytic cleavage in the 3'- to 5'-direction to yield nucleoside 5'-phosphates.. Its function is as follows. Involved in mRNA degradation. Hydrolyzes single-stranded polyribonucleotides processively in the 3' to 5' direction. This is Exoribonuclease 2 from Salmonella agona (strain SL483).